The following is a 1408-amino-acid chain: DNA-directed RNA polymerase subunit beta' (1408 aa).

Residues cysteine 70, cysteine 72, cysteine 85, and cysteine 88 each contribute to the Zn(2+) site. The Mg(2+) site is built by aspartate 460, aspartate 462, and aspartate 464. 4 residues coordinate Zn(2+): cysteine 814, cysteine 887, cysteine 894, and cysteine 897.

Belongs to the RNA polymerase beta' chain family. As to quaternary structure, the RNAP catalytic core consists of 2 alpha, 1 beta, 1 beta' and 1 omega subunit. When a sigma factor is associated with the core the holoenzyme is formed, which can initiate transcription. It depends on Mg(2+) as a cofactor. The cofactor is Zn(2+).

The catalysed reaction is RNA(n) + a ribonucleoside 5'-triphosphate = RNA(n+1) + diphosphate. Functionally, DNA-dependent RNA polymerase catalyzes the transcription of DNA into RNA using the four ribonucleoside triphosphates as substrates. The protein is DNA-directed RNA polymerase subunit beta' of Hydrogenovibrio crunogenus (strain DSM 25203 / XCL-2) (Thiomicrospira crunogena).